Here is a 944-residue protein sequence, read N- to C-terminus: Translation initiation factor IF-2 (944 aa).

Disordered stretches follow at residues 61–157 (IQAN…KAKQ) and 173–281 (TQSN…SHKI). A compositionally biased stretch (polar residues) spans 132-150 (TFENQTPPTENTPKVVSHS). Low complexity predominate over residues 175 to 185 (SNANNASNANN). Positions 186-203 (AKKEISEVKKQEQEIKRH) are enriched in basic and acidic residues. Over residues 204–215 (ENIKRRTGFRVI) the composition is skewed to basic residues. Positions 244-259 (EDIKKEWQEKDKQEAK) are enriched in basic and acidic residues. The region spanning 443–612 (ERPPVVTIMG…LIQAGIMELK (170 aa)) is the tr-type G domain. A G1 region spans residues 452-459 (GHVDHGKT). Position 452–459 (452–459 (GHVDHGKT)) interacts with GTP. Residues 477–481 (GITQH) form a G2 region. A G3 region spans residues 498 to 501 (DTPG). Residues 498-502 (DTPGH) and 552-555 (NKMD) contribute to the GTP site. Residues 552 to 555 (NKMD) form a G4 region. Positions 588–590 (SAK) are G5.

This sequence belongs to the TRAFAC class translation factor GTPase superfamily. Classic translation factor GTPase family. IF-2 subfamily.

It is found in the cytoplasm. One of the essential components for the initiation of protein synthesis. Protects formylmethionyl-tRNA from spontaneous hydrolysis and promotes its binding to the 30S ribosomal subunits. Also involved in the hydrolysis of GTP during the formation of the 70S ribosomal complex. The polypeptide is Translation initiation factor IF-2 (infB) (Helicobacter pylori (strain ATCC 700392 / 26695) (Campylobacter pylori)).